A 170-amino-acid polypeptide reads, in one-letter code: Putative beta-eliminating lyase-like protein (170 aa).

Residue Lys-32 is modified to N6-(pyridoxal phosphate)lysine.

It belongs to the beta-eliminating lyase family. Pyridoxal 5'-phosphate is required as a cofactor.

The chain is Putative beta-eliminating lyase-like protein from Dictyostelium discoideum (Social amoeba).